The primary structure comprises 74 residues: MKKSVVAKIIAGSTLVIGSSAFAADDATSQAKAAFDSLTAQATEMSGYAWALVVLVVGATVGIKLFKKFVSRAS.

Residues 1-23 form the signal peptide; sequence MKKSVVAKIIAGSTLVIGSSAFA. At 24-45 the chain is on the periplasmic side; sequence ADDATSQAKAAFDSLTAQATEM. A helical membrane pass occupies residues 46 to 66; it reads SGYAWALVVLVVGATVGIKLF. Topologically, residues 67 to 74 are cytoplasmic; it reads KKFVSRAS.

The protein belongs to the inovirus capsid protein family. Homomultimerizes. There are several thousands of this protein in the phage capsid.

It is found in the virion. The protein resides in the host membrane. Its function is as follows. Self assembles to form a helical capsid wrapping up the viral genomic DNA. The capsid displays a filamentous structure with a length of 760-1950 nm and a width of 6-8 nm. The virion assembly and budding take place at the host inner membrane. The polypeptide is Capsid protein G8P (VIII) (Escherichia coli (Bacteriophage If1)).